Here is a 257-residue protein sequence, read N- to C-terminus: Probable septum site-determining protein MinC (257 aa).

The span at 123–141 shows a compositional bias: low complexity; it reads AVEAAAAPAAEPTPEPGAA. Positions 123–144 are disordered; sequence AVEAAAAPAAEPTPEPGAASQP.

This sequence belongs to the MinC family. In terms of assembly, interacts with MinD and FtsZ.

Functionally, cell division inhibitor that blocks the formation of polar Z ring septums. Rapidly oscillates between the poles of the cell to destabilize FtsZ filaments that have formed before they mature into polar Z rings. Prevents FtsZ polymerization. The polypeptide is Probable septum site-determining protein MinC (Burkholderia multivorans (strain ATCC 17616 / 249)).